Here is a 96-residue protein sequence, read N- to C-terminus: DNA-binding protein HmvA (96 aa).

Residues 52-55 (KTIK) form an interaction with DNA region.

This sequence belongs to the archaeal histone HMF family. As to quaternary structure, homodimer. Dimers then assemble into higher oligomers, with the DNA wrapped around the protein core.

The protein localises to the cytoplasm. It localises to the chromosome. Functionally, binds and compact DNA (95 to 150 base pairs) to form nucleosome-like structures that contain positive DNA supercoils. Increases the resistance of DNA to thermal denaturation (in vitro). This chain is DNA-binding protein HmvA (hmvA), found in Methanocaldococcus jannaschii (strain ATCC 43067 / DSM 2661 / JAL-1 / JCM 10045 / NBRC 100440) (Methanococcus jannaschii).